The chain runs to 111 residues: Thiosulfate sulfurtransferase GlpE (111 aa).

The 89-residue stretch at 16 to 104 folds into the Rhodanese domain; the sequence is QTENAVLLDV…WQRAGLPMET (89 aa). The Cysteine persulfide intermediate role is filled by cysteine 64.

It belongs to the GlpE family.

It is found in the cytoplasm. The catalysed reaction is thiosulfate + hydrogen cyanide = thiocyanate + sulfite + 2 H(+). The enzyme catalyses thiosulfate + [thioredoxin]-dithiol = [thioredoxin]-disulfide + hydrogen sulfide + sulfite + 2 H(+). In terms of biological role, transferase that catalyzes the transfer of sulfur from thiosulfate to thiophilic acceptors such as cyanide or dithiols. May function in a CysM-independent thiosulfate assimilation pathway by catalyzing the conversion of thiosulfate to sulfite, which can then be used for L-cysteine biosynthesis. This Actinobacillus succinogenes (strain ATCC 55618 / DSM 22257 / CCUG 43843 / 130Z) protein is Thiosulfate sulfurtransferase GlpE.